The primary structure comprises 126 residues: Holo-[acyl-carrier-protein] synthase (126 aa).

Mg(2+) is bound by residues Asp8 and Glu57.

Belongs to the P-Pant transferase superfamily. AcpS family. The cofactor is Mg(2+).

The protein localises to the cytoplasm. It carries out the reaction apo-[ACP] + CoA = holo-[ACP] + adenosine 3',5'-bisphosphate + H(+). Its function is as follows. Transfers the 4'-phosphopantetheine moiety from coenzyme A to a Ser of acyl-carrier-protein. The polypeptide is Holo-[acyl-carrier-protein] synthase (Vibrio cholerae serotype O1 (strain ATCC 39541 / Classical Ogawa 395 / O395)).